A 154-amino-acid polypeptide reads, in one-letter code: Ribonuclease H (154 aa).

One can recognise an RNase H type-1 domain in the interval Met1–Gly142. 4 residues coordinate Mg(2+): Asp10, Glu48, Asp70, and Asp134.

The protein belongs to the RNase H family. As to quaternary structure, monomer. It depends on Mg(2+) as a cofactor.

Its subcellular location is the cytoplasm. It catalyses the reaction Endonucleolytic cleavage to 5'-phosphomonoester.. Functionally, endonuclease that specifically degrades the RNA of RNA-DNA hybrids. This is Ribonuclease H from Edwardsiella ictaluri (strain 93-146).